The chain runs to 466 residues: Argininosuccinate lyase (466 aa).

The protein belongs to the lyase 1 family. Argininosuccinate lyase subfamily.

Its subcellular location is the cytoplasm. It carries out the reaction 2-(N(omega)-L-arginino)succinate = fumarate + L-arginine. It functions in the pathway amino-acid biosynthesis; L-arginine biosynthesis; L-arginine from L-ornithine and carbamoyl phosphate: step 3/3. In Brucella canis (strain ATCC 23365 / NCTC 10854 / RM-666), this protein is Argininosuccinate lyase.